The chain runs to 1405 residues: DNA-directed RNA polymerase subunit beta' (1405 aa).

Positions 70, 72, 85, and 88 each coordinate Zn(2+). Residues D458, D460, and D462 each coordinate Mg(2+). Zn(2+) is bound by residues C813, C887, C894, and C897.

The protein belongs to the RNA polymerase beta' chain family. As to quaternary structure, the RNAP catalytic core consists of 2 alpha, 1 beta, 1 beta' and 1 omega subunit. When a sigma factor is associated with the core the holoenzyme is formed, which can initiate transcription. Requires Mg(2+) as cofactor. Zn(2+) serves as cofactor.

It catalyses the reaction RNA(n) + a ribonucleoside 5'-triphosphate = RNA(n+1) + diphosphate. Functionally, DNA-dependent RNA polymerase catalyzes the transcription of DNA into RNA using the four ribonucleoside triphosphates as substrates. This is DNA-directed RNA polymerase subunit beta' from Albidiferax ferrireducens (strain ATCC BAA-621 / DSM 15236 / T118) (Rhodoferax ferrireducens).